We begin with the raw amino-acid sequence, 159 residues long: Ribonuclease H (159 aa).

The 142-residue stretch at 4–145 (THKQVNIYTD…CDKLARDAAE (142 aa)) folds into the RNase H type-1 domain. Asp-13, Glu-51, Asp-73, and Asp-137 together coordinate Mg(2+).

The protein belongs to the RNase H family. As to quaternary structure, monomer. Mg(2+) serves as cofactor.

The protein localises to the cytoplasm. The enzyme catalyses Endonucleolytic cleavage to 5'-phosphomonoester.. In terms of biological role, endonuclease that specifically degrades the RNA of RNA-DNA hybrids. This Shewanella denitrificans (strain OS217 / ATCC BAA-1090 / DSM 15013) protein is Ribonuclease H.